The chain runs to 132 residues: Large ribosomal subunit protein uL14 (132 aa).

This sequence belongs to the universal ribosomal protein uL14 family. In terms of assembly, part of the 50S ribosomal subunit. Forms a cluster with proteins L3 and L24e, part of which may contact the 16S rRNA in 2 intersubunit bridges.

Functionally, binds to 23S rRNA. Forms part of two intersubunit bridges in the 70S ribosome. The protein is Large ribosomal subunit protein uL14 of Picrophilus torridus (strain ATCC 700027 / DSM 9790 / JCM 10055 / NBRC 100828 / KAW 2/3).